Consider the following 170-residue polypeptide: Centrin-2 (170 aa).

The interval methionine 1 to proline 21 is disordered. 4 EF-hand domains span residues aspartate 26–glutamate 61, threonine 62–aspartate 97, glutamate 99–threonine 134, and methionine 135–proline 170. Ca(2+) contacts are provided by aspartate 39, aspartate 41, serine 43, methionine 45, and glutamate 50.

The protein belongs to the centrin family. In terms of assembly, monomer. Does not homooligomerize.

Its subcellular location is the cytoplasm. It is found in the cytoskeleton. The protein resides in the microtubule organizing center. It localises to the centrosome. Functionally, in tachyzoites, plays an essential role in microneme secretion that ensures parasite motility and attachment to, invasion of and egress from host cells. Also involved in the architecture of the peripheral annuli where it appears to regulate the localization of PAP2. In association with the myosin motor MyoJ, involved in the constriction of the basal complex at the end of daughter cell division in an actin-dependent manner; the basal complex is a cytoskeletal structure formed at the tachyzoite basal pole during daughter cell formation. May be involved in parasite replication. This Toxoplasma gondii (strain ATCC 50611 / Me49) protein is Centrin-2.